The following is a 389-amino-acid chain: Large envelope protein (389 aa).

Met1 is subject to N-acetylmethionine. Gly2 carries N-myristoyl glycine; by host lipidation. A pre-S1 region spans residues 2–108 (GTNLSVPNPL…PPLRDSHPQA (107 aa)). The pre-S stretch occupies residues 2–163 (GTNLSVPNPL…FSRTGDPAPN (162 aa)). Topologically, residues 2–170 (GTNLSVPNPL…APNMESTTSG (169 aa)) are virion surface; in external conformation. Topologically, residues 2–242 (GTNLSVPNPL…PGYRWMCLRR (241 aa)) are intravirion; in internal conformation. The segment at 74 to 105 (LTTVPAAPPPASTNRQSGRQPTPISPPLRDSH) is disordered. Over residues 85–95 (STNRQSGRQPT) the composition is skewed to polar residues. The pre-S2 stretch occupies residues 109–163 (MQWNSTTFHQALLDPRVRGLYFPAGGSSSGTVNPVPTIVSPISSIFSRTGDPAPN). The helical transmembrane segment at 171–191 (FLGPLLVLQAGFFLLTRILTI) threads the bilayer. Residues 192 to 242 (PQSLDSWWTSLNFLGEAPTCPGQNSQSPTSNHSPTSCPPICPGYRWMCLRR) are Intravirion; in external conformation-facing. Residues 243–263 (FIIFLFILLLCLIFLLVLLDY) form a helical membrane-spanning segment. The Virion surface portion of the chain corresponds to 264-337 (QGMLPVCPLL…WASVRFSWLS (74 aa)). Asn309 carries N-linked (GlcNAc...) asparagine; by host glycosylation. Residues 338-358 (LLVPFVQWFAGLSPTVWLSVI) form a helical membrane-spanning segment. Over 359–364 (WMMWYW) the chain is Intravirion. Residues 365–387 (GPSLYNILSPFLPLLPIFFCLWV) form a helical membrane-spanning segment. Residues 388–389 (YI) are Virion surface-facing.

The protein belongs to the orthohepadnavirus major surface antigen family. As to quaternary structure, in its internal form (Li-HBsAg), interacts with the capsid protein and with the isoform S. Interacts with host chaperone CANX. Associates with host chaperone CANX through its pre-S2 N glycan; this association may be essential for isoform M proper secretion. In terms of assembly, interacts with isoform L. Interacts with the antigens of satellite virus HDV (HDVAgs); this interaction is required for encapsidation of HDV genomic RNA. Post-translationally, isoform M is N-terminally acetylated by host at a ratio of 90%, and N-glycosylated by host at the pre-S2 region. Myristoylated.

Its subcellular location is the virion membrane. Functionally, the large envelope protein exists in two topological conformations, one which is termed 'external' or Le-HBsAg and the other 'internal' or Li-HBsAg. In its external conformation the protein attaches the virus to cell receptors and thereby initiating infection. This interaction determines the species specificity and liver tropism. This attachment induces virion internalization predominantly through caveolin-mediated endocytosis. The large envelope protein also assures fusion between virion membrane and endosomal membrane. In its internal conformation the protein plays a role in virion morphogenesis and mediates the contact with the nucleocapsid like a matrix protein. The middle envelope protein plays an important role in the budding of the virion. It is involved in the induction of budding in a nucleocapsid independent way. In this process the majority of envelope proteins bud to form subviral lipoprotein particles of 22 nm of diameter that do not contain a nucleocapsid. This chain is Large envelope protein, found in Hepatitis B virus genotype C subtype adr (isolate Japan/A4/1994) (HBV-C).